Consider the following 158-residue polypeptide: 2-C-methyl-D-erythritol 2,4-cyclodiphosphate synthase (158 aa).

Positions 8 and 10 each coordinate a divalent metal cation. Residues 8-10 and 34-35 each bind 4-CDP-2-C-methyl-D-erythritol 2-phosphate; these read DVH and HS. His-42 provides a ligand contact to a divalent metal cation. 4-CDP-2-C-methyl-D-erythritol 2-phosphate-binding positions include 56 to 58, 132 to 135, and Arg-142; these read DIG and TTNE.

It belongs to the IspF family. Homotrimer. A divalent metal cation is required as a cofactor.

The enzyme catalyses 4-CDP-2-C-methyl-D-erythritol 2-phosphate = 2-C-methyl-D-erythritol 2,4-cyclic diphosphate + CMP. The protein operates within isoprenoid biosynthesis; isopentenyl diphosphate biosynthesis via DXP pathway; isopentenyl diphosphate from 1-deoxy-D-xylulose 5-phosphate: step 4/6. In terms of biological role, involved in the biosynthesis of isopentenyl diphosphate (IPP) and dimethylallyl diphosphate (DMAPP), two major building blocks of isoprenoid compounds. Catalyzes the conversion of 4-diphosphocytidyl-2-C-methyl-D-erythritol 2-phosphate (CDP-ME2P) to 2-C-methyl-D-erythritol 2,4-cyclodiphosphate (ME-CPP) with a corresponding release of cytidine 5-monophosphate (CMP). This chain is 2-C-methyl-D-erythritol 2,4-cyclodiphosphate synthase, found in Chlorobium phaeobacteroides (strain DSM 266 / SMG 266 / 2430).